The following is a 255-amino-acid chain: Small ribosomal subunit protein eS1 (255 aa).

The segment covering Met1 to Lys18 has biased composition (basic residues). The interval Met1 to Asp28 is disordered. Ala2 carries the N-acetylalanine; partial modification. The segment covering Arg19–Asp28 has biased composition (basic and acidic residues).

This sequence belongs to the eukaryotic ribosomal protein eS1 family. Component of the small ribosomal subunit. Mature ribosomes consist of a small (40S) and a large (60S) subunit. The 40S subunit contains about 33 different proteins and 1 molecule of RNA (18S). The 60S subunit contains about 49 different proteins and 3 molecules of RNA (25S, 5.8S and 5S).

It localises to the cytoplasm. This is Small ribosomal subunit protein eS1 from Ajellomyces dermatitidis (strain ER-3 / ATCC MYA-2586) (Blastomyces dermatitidis).